A 367-amino-acid polypeptide reads, in one-letter code: 2,6-dihydropseudooxynicotine hydrolase (367 aa).

Active-site residues include glutamate 148, serine 217, aspartate 300, and histidine 329.

It belongs to the AB hydrolase superfamily. As to quaternary structure, homodimer.

The catalysed reaction is 2,6-dihydroxypseudooxynicotine + H2O = 2,6-dihydroxypyridine + 4-(methylamino)butanoate + H(+). It functions in the pathway alkaloid degradation; nicotine degradation; 2,6-dihydroxypyridine and 4-(methylamino)butanoate from 6-hydroxypseudooxynicotine: step 2/2. In terms of biological role, L-nicotine is used as a growth substrate. Plays a role in nicotine catabolism by cleaving a C-C bond in 2,6-dihydroxypseudooxynicotine. The polypeptide is 2,6-dihydropseudooxynicotine hydrolase (Paenarthrobacter nicotinovorans (Arthrobacter nicotinovorans)).